The sequence spans 980 residues: Thrombospondin-4 (980 aa).

Residues 1–42 (MTMITPSSKLTLTKGNKSWSSTRCGAFLLLHLVLQPWQRAGA) form the signal peptide. In terms of domain architecture, Laminin G-like spans 43 to 210 (QATPQVFDLL…LEELKLVVRG (168 aa)). The EGF-like 1 domain occupies 304–343 (PTRRCDSSPCFRGVRCTDTRDGFQCGPCPDGYTGNGITCS). 21 disulfides stabilise this stretch: Cys-308/Cys-319, Cys-313/Cys-328, Cys-331/Cys-342, Cys-348/Cys-359, Cys-353/Cys-368, Cys-371/Cys-395, Cys-401/Cys-412, Cys-406/Cys-421, Cys-424/Cys-436, Cys-442/Cys-456, Cys-450/Cys-466, Cys-468/Cys-480, Cys-496/Cys-501, Cys-506/Cys-526, Cys-542/Cys-562, Cys-565/Cys-585, Cys-601/Cys-621, Cys-624/Cys-644, Cys-662/Cys-682, Cys-702/Cys-722, and Cys-738/Cys-959. The EGF-like 2; calcium-binding domain maps to 344–381 (DVDECKYHPCYPGVRCTNLAPGFRCDACPVGFTGPMVQ). Residues 397–434 (DVDECRNGACVLNSICINTLGSYRCGPCKPGYTGDQTR) enclose the EGF-like 3; calcium-binding domain. Positions 438-481 (TERSCRNPEQNPCSVHAQCIEERQGDVTCVCGVGWAGRAGYVCG) constitute an EGF-like 4 domain. TSP type-3 repeat units follow at residues 482–514 (KDVD…NSGQ), 515–550 (EDAD…NVDQ), 551–573 (RNTD…NNDQ), 574–609 (KDTD…NRDQ), 610–632 (QDRD…NPNQ), 633–670 (SDVD…NSAQ), 671–710 (LDTD…NPAQ), and 711–746 (EDSN…EITL). Residues 596-691 (NILDNCPRVP…CDDDDDNDGM (96 aa)) are disordered. Over residues 605–615 (PNRDQQDRDGD) the composition is skewed to basic and acidic residues. N-linked (GlcNAc...) asparagine glycosylation is present at Asn-631. Polar residues predominate over residues 659–671 (TDNCPTVINSAQL). A compositionally biased stretch (acidic residues) spans 679 to 690 (GDECDDDDDNDG). Residues 750-964 (RAYQTVVLDP…LKYRCNDTIP (215 aa)) form the TSP C-terminal domain. An N-linked (GlcNAc...) asparagine glycan is attached at Asn-960.

Belongs to the thrombospondin family. In terms of assembly, homopentamer; disulfide-linked. Interacts with PTBP3. Interacts (via EGF-like 3; calcium-binding domain) with ATF6 and facilitates its processing, activation and nuclear translocation. Interacts with NOTCH1. As to expression, mainly expressed in astrocytes, and in ressponse to peripheral nerve injury, significantly up-regulated in the dorsal spinal cord (at protein level).

It is found in the endoplasmic reticulum. The protein localises to the sarcoplasmic reticulum. Its subcellular location is the secreted. The protein resides in the extracellular space. It localises to the extracellular matrix. Adhesive glycoprotein that mediates cell-to-cell and cell-to-matrix interactions and is involved in various processes including cellular proliferation, migration, adhesion and attachment, inflammatory response to CNS injury, regulation of vascular inflammation and adaptive responses of the heart to pressure overload and in myocardial function and remodeling. Binds to structural extracellular matrix (ECM) proteins and modulates the ECM in response to tissue damage, contributing to cardioprotective and adaptive ECM remodeling. Plays a role in ER stress response, via its interaction with the activating transcription factor 6 alpha (ATF6) which produces adaptive ER stress response factors and protects myocardium from pressure overload. May contribute to spinal presynaptic hypersensitivity and neuropathic pain states after peripheral nerve injury. May play a role in regulating protective astrogenesis from the subventricular zone (SVZ) niche after injury in a NOTCH1-dependent manner. In Rattus norvegicus (Rat), this protein is Thrombospondin-4 (Thbs4).